The primary structure comprises 504 residues: Peptidyl-prolyl cis-trans isomerase CYP57 (504 aa).

Residue serine 2 is modified to N-acetylserine. The region spanning 16-167 is the PPIase cyclophilin-type domain; that stretch reads IVNTTHGPID…DPAPKILSVE (152 aa). Residues 204 to 274 adopt a coiled-coil conformation; that stretch reads NLLSFGEEAE…AKKEAAQKDK (71 aa). Basic and acidic residues-rich tracts occupy residues 237-275, 344-354, and 364-374; these read RLLKAEASDKERNASESKEVLSVREALNAKKEAAQKDKS, EDEKPRMEKLS, and AKAEHMEKGDT. Disordered regions lie at residues 237 to 374, 416 to 441, and 482 to 504; these read RLLK…KGDT, AKPFTSSNEPVVLTSSSEPVDNKEED, and EKFNRMQAKQKRREREWSGKSLA. A compositionally biased stretch (polar residues) spans 416-434; sequence AKPFTSSNEPVVLTSSSEP. The segment covering 494–504 has biased composition (basic and acidic residues); sequence REREWSGKSLA.

The protein belongs to the cyclophilin-type PPIase family. In terms of tissue distribution, ubiquitous.

Its subcellular location is the nucleus. It localises to the cytoplasm. It carries out the reaction [protein]-peptidylproline (omega=180) = [protein]-peptidylproline (omega=0). Functionally, PPIases accelerate the folding of proteins. It catalyzes the cis-trans isomerization of proline imidic peptide bonds in oligopeptides. Involved in plant response to pathogen infection by increasing PAD4 expression in absence of EDS1 up-regulation. The polypeptide is Peptidyl-prolyl cis-trans isomerase CYP57 (CYP57) (Arabidopsis thaliana (Mouse-ear cress)).